Here is a 291-residue protein sequence, read N- to C-terminus: MNNEHAEVMEMHMPTEKIVGQTDLYSIKSSTVRTPDAMPRPIRVKAREVNVFYGSKQALFDVSIDVPERAVTAFIGPSGCGKSTFLRCFNRMNDTIEGSKVTGRIELDGADIYDGSIDVVELRARIGMVFQKPNPFPKSIYENVAYGPRIHGLASAKGDLDRIVETSLQKAGLWNEVKDRLHEPGTGLSGGQQQRLCIARAIAVSPEVILMDEPCSALDPIATAKVEELIDELRENYTIVIVTHSMQQAARVSQRTAMFHLGYLVEEGPTDKMFTNPEEKRTQDYITGRFG.

In terms of domain architecture, ABC transporter spans 44-286; it reads VKAREVNVFY…PEEKRTQDYI (243 aa). Residue 76–83 coordinates ATP; it reads GPSGCGKS.

This sequence belongs to the ABC transporter superfamily. Phosphate importer (TC 3.A.1.7) family. As to quaternary structure, the complex is composed of two ATP-binding proteins (PstB), two transmembrane proteins (PstC and PstA) and a solute-binding protein (PstS).

The protein resides in the cell inner membrane. The enzyme catalyses phosphate(out) + ATP + H2O = ADP + 2 phosphate(in) + H(+). In terms of biological role, part of the ABC transporter complex PstSACB involved in phosphate import. Responsible for energy coupling to the transport system. The chain is Phosphate import ATP-binding protein PstB from Chelativorans sp. (strain BNC1).